Here is a 627-residue protein sequence, read N- to C-terminus: Protein zyg-11 homolog A (627 aa).

LRR repeat units lie at residues 123–146 (LPNL…LSCK), 203–227 (LPNL…SFLQ), and 409–432 (ITSI…LIMA).

It belongs to the zyg-11 family.

Probably acts as a target recruitment subunit in an E3 ubiquitin ligase complex ZYGA-CUL2-elongin BC. This chain is Protein zyg-11 homolog A (Zyg11a), found in Mus musculus (Mouse).